Here is a 351-residue protein sequence, read N- to C-terminus: ADP-glucose phosphorylase (351 aa).

Positions 1–63 (MTSPSHASDR…QNPNPKPSSC (63 aa)) are disordered. Residue 41–44 (RAKR) coordinates ADP-alpha-D-glucose. Cys63 and Cys66 together coordinate Zn(2+). ADP-alpha-D-glucose-binding positions include 72 to 74 (ECA) and Asn94. His133 contributes to the Zn(2+) binding site. ADP-alpha-D-glucose is bound by residues Asn173 and 179–182 (GASM). His184 lines the Zn(2+) pocket. His186 functions as the Tele-AMP-histidine intermediate in the catalytic mechanism. Gln188 contributes to the ADP-alpha-D-glucose binding site. Cys216, Cys219, His255, and His310 together coordinate Zn(2+). Residues Gly321 and 325–326 (FE) each bind ADP-alpha-D-glucose.

This sequence belongs to the galactose-1-phosphate uridylyltransferase type 1 family. Homodimer. It depends on Zn(2+) as a cofactor.

The catalysed reaction is alpha-D-glucose 1-phosphate + ADP + H(+) = ADP-alpha-D-glucose + phosphate. Functionally, catalyzes the conversion of ADP-glucose and inorganic phosphate (Pi) into glucose-1-phosphate and ADP. Does not possess galactose-1-phosphate uridylyltransferase activity. The protein is ADP-glucose phosphorylase of Arabidopsis thaliana (Mouse-ear cress).